Reading from the N-terminus, the 180-residue chain is Cytokinin-beta-glucosidase 4 (180 aa).

Hydrolyzes cytokinin glucosides thus liberating free cytokinins. This chain is Cytokinin-beta-glucosidase 4 (ROLC4), found in Panax ginseng (Korean ginseng).